Reading from the N-terminus, the 126-residue chain is Small ribosomal subunit protein eS6 (126 aa).

Belongs to the eukaryotic ribosomal protein eS6 family.

The sequence is that of Small ribosomal subunit protein eS6 from Nanoarchaeum equitans (strain Kin4-M).